Reading from the N-terminus, the 145-residue chain is Basic phospholipase A2 S11-61 (145 aa).

The N-terminal stretch at 1-19 is a signal peptide; sequence MYPVHLLVLLAVCVSLLGA. Positions 20 to 27 are excised as a propeptide; that stretch reads SNIPPQPL. Intrachain disulfides connect cysteine 38–cysteine 98, cysteine 54–cysteine 144, cysteine 56–cysteine 72, cysteine 71–cysteine 125, cysteine 78–cysteine 118, cysteine 87–cysteine 111, and cysteine 105–cysteine 116. Ca(2+)-binding residues include tyrosine 55, glycine 57, and glycine 59. Residue histidine 75 is part of the active site. Aspartate 76 contacts Ca(2+). The active site involves aspartate 119.

The protein belongs to the phospholipase A2 family. Group I subfamily. D49 sub-subfamily. Ca(2+) serves as cofactor. In terms of tissue distribution, expressed by the venom gland.

It localises to the secreted. It carries out the reaction a 1,2-diacyl-sn-glycero-3-phosphocholine + H2O = a 1-acyl-sn-glycero-3-phosphocholine + a fatty acid + H(+). Snake venom phospholipase A2 (PLA2) that inhibits collagen-induced platelet aggregation. PLA2 catalyzes the calcium-dependent hydrolysis of the 2-acyl groups in 3-sn-phosphoglycerides. This Austrelaps superbus (Lowland copperhead snake) protein is Basic phospholipase A2 S11-61.